The chain runs to 253 residues: Trypsin delta (253 aa).

Residues 1-22 (MLKFVILLSAVACALGGTIPEG) form the signal peptide. A propeptide spans 23–30 (LLPQLDGR) (activation peptide). The Peptidase S1 domain maps to 31 to 253 (IVGGTATTIS…DLRAWVVRNA (223 aa)). A disulfide bridge connects residues Cys56 and Cys72. Active-site charge relay system residues include His71 and Asp116. 2 disulfides stabilise this stretch: Cys180–Cys197 and Cys206–Cys230. Ser210 acts as the Charge relay system in catalysis.

It belongs to the peptidase S1 family.

Its subcellular location is the secreted. It localises to the extracellular space. It carries out the reaction Preferential cleavage: Arg-|-Xaa, Lys-|-Xaa.. The chain is Trypsin delta from Drosophila erecta (Fruit fly).